The primary structure comprises 660 residues: Bifunctional polymyxin resistance protein ArnA (660 aa).

The segment at 1 to 304 is formyltransferase ArnAFT; sequence MKAVIFAYHD…TLGLVAGARL (304 aa). The Proton donor; for formyltransferase activity role is filled by histidine 104. (6R)-10-formyltetrahydrofolate is bound by residues arginine 114 and 136–140; that span reads VKRAD. Residues 314–660 form a dehydrogenase ArnADH region; that stretch reads RRIRVLILGV…RSVDVAERAS (347 aa). Residues aspartate 347 and 368-369 each bind NAD(+); that span reads DI. Residues alanine 393, tyrosine 398, and 432-433 each bind UDP-alpha-D-glucuronate; that span reads TS. The active-site Proton acceptor; for decarboxylase activity is the glutamate 434. UDP-alpha-D-glucuronate is bound by residues arginine 460, asparagine 492, 526 to 535, and tyrosine 613; that span reads KLIDGGQQKR. Arginine 619 (proton donor; for decarboxylase activity) is an active-site residue.

The protein in the N-terminal section; belongs to the Fmt family. UDP-L-Ara4N formyltransferase subfamily. This sequence in the C-terminal section; belongs to the NAD(P)-dependent epimerase/dehydratase family. UDP-glucuronic acid decarboxylase subfamily. As to quaternary structure, homohexamer, formed by a dimer of trimers.

It carries out the reaction UDP-alpha-D-glucuronate + NAD(+) = UDP-beta-L-threo-pentopyranos-4-ulose + CO2 + NADH. The catalysed reaction is UDP-4-amino-4-deoxy-beta-L-arabinose + (6R)-10-formyltetrahydrofolate = UDP-4-deoxy-4-formamido-beta-L-arabinose + (6S)-5,6,7,8-tetrahydrofolate + H(+). The protein operates within nucleotide-sugar biosynthesis; UDP-4-deoxy-4-formamido-beta-L-arabinose biosynthesis; UDP-4-deoxy-4-formamido-beta-L-arabinose from UDP-alpha-D-glucuronate: step 1/3. It functions in the pathway nucleotide-sugar biosynthesis; UDP-4-deoxy-4-formamido-beta-L-arabinose biosynthesis; UDP-4-deoxy-4-formamido-beta-L-arabinose from UDP-alpha-D-glucuronate: step 3/3. Its pathway is bacterial outer membrane biogenesis; lipopolysaccharide biosynthesis. Its function is as follows. Bifunctional enzyme that catalyzes the oxidative decarboxylation of UDP-glucuronic acid (UDP-GlcUA) to UDP-4-keto-arabinose (UDP-Ara4O) and the addition of a formyl group to UDP-4-amino-4-deoxy-L-arabinose (UDP-L-Ara4N) to form UDP-L-4-formamido-arabinose (UDP-L-Ara4FN). The modified arabinose is attached to lipid A and is required for resistance to polymyxin and cationic antimicrobial peptides. The protein is Bifunctional polymyxin resistance protein ArnA of Salmonella enteritidis PT4 (strain P125109).